The primary structure comprises 536 residues: MGLRPAVLLLCASVSLLGGLTFGYELAVISGALLPLQLNFGLSCLEQELLVGSLLLGALLASLVGGFLIDCYGRRRAILGSNAVLLAGSLILGLASSLPWLLLGRLSVGFAISLSSMACCIYVSELVGPRQRGVLVSLYEVGITVGILFSYGLNYVLAGSPWGWRHMFGWAAAPALLQSLSLFLLPAGAEGTAAPKDLIPLQGRETSKPGLVKPQYSFLDLFRAQDGMWSRTVVGLGLVLFQQLTGQPNVLYYASTIFRSVGFHGGSSAVLASVGLGTVKVAATLVATGLVDRAGRRVLLLFGCALMALSVSGIGLVSFAVSLDSGPSCLATSNASQQVDLPGSSGLLVRSSLPPVLHTNGDQGQLVLSVTERPIHPVITASLGPVLNTASPVPTSPILEHTLLCWSALVCMMVYVSAFSVGFGPVTWLVLSEIYPAEIRGRAFAFCSSFNWAANLFISLSFLDLIGAIGLAWTFLLYGLTAVLGLAFIYLLVPETKGQSLAEIEQQFQTSRFPLNFGHRQRIGIQYHRLDVSSAS.

Over 1-15 (MGLRPAVLLLCASVS) the chain is Cytoplasmic. A helical transmembrane segment spans residues 16 to 36 (LLGGLTFGYELAVISGALLPL). Residues 37 to 48 (QLNFGLSCLEQE) lie on the Extracellular side of the membrane. Residues 49 to 69 (LLVGSLLLGALLASLVGGFLI) form a helical membrane-spanning segment. At 70-82 (DCYGRRRAILGSN) the chain is on the cytoplasmic side. The chain crosses the membrane as a helical span at residues 83 to 103 (AVLLAGSLILGLASSLPWLLL). Topologically, residues 104–107 (GRLS) are extracellular. Residues 108–128 (VGFAISLSSMACCIYVSELVG) form a helical membrane-spanning segment. At 129–132 (PRQR) the chain is on the cytoplasmic side. A helical transmembrane segment spans residues 133-153 (GVLVSLYEVGITVGILFSYGL). Topologically, residues 154 to 166 (NYVLAGSPWGWRH) are extracellular. The chain crosses the membrane as a helical span at residues 167–187 (MFGWAAAPALLQSLSLFLLPA). The Cytoplasmic portion of the chain corresponds to 188-232 (GAEGTAAPKDLIPLQGRETSKPGLVKPQYSFLDLFRAQDGMWSRT). Residues 233-253 (VVGLGLVLFQQLTGQPNVLYY) traverse the membrane as a helical segment. 242–243 (QQ) is a D-glucose binding site. Residues 254–269 (ASTIFRSVGFHGGSSA) are Extracellular-facing. The helical transmembrane segment at 270–290 (VLASVGLGTVKVAATLVATGL) threads the bilayer. Over 291–298 (VDRAGRRV) the chain is Cytoplasmic. Residues 299–319 (LLLFGCALMALSVSGIGLVSF) form a helical membrane-spanning segment. Residues 320–402 (AVSLDSGPSC…VPTSPILEHT (83 aa)) lie on the Extracellular side of the membrane. A helical transmembrane segment spans residues 403-423 (LLCWSALVCMMVYVSAFSVGF). Residues 424 to 442 (GPVTWLVLSEIYPAEIRGR) lie on the Cytoplasmic side of the membrane. Trp-428 is a D-glucose binding site. A helical transmembrane segment spans residues 443–463 (AFAFCSSFNWAANLFISLSFL). At 464-468 (DLIGA) the chain is on the extracellular side. The helical transmembrane segment at 469–489 (IGLAWTFLLYGLTAVLGLAFI) threads the bilayer. Residues 490 to 536 (YLLVPETKGQSLAEIEQQFQTSRFPLNFGHRQRIGIQYHRLDVSSAS) are Cytoplasmic-facing.

This sequence belongs to the major facilitator superfamily. Sugar transporter (TC 2.A.1.1) family. Glucose transporter subfamily.

It localises to the endomembrane system. Its subcellular location is the cytoplasm. The protein localises to the perinuclear region. The catalysed reaction is D-glucose(out) = D-glucose(in). Facilitative glucose transporter required for the development of the cardiovascular system. This is Solute carrier family 2, facilitated glucose transporter member 10 from Mus musculus (Mouse).